The primary structure comprises 123 residues: Small ribosomal subunit protein uS12cz/uS12cy (123 aa).

Belongs to the universal ribosomal protein uS12 family. In terms of assembly, part of the 30S ribosomal subunit.

The protein resides in the plastid. It localises to the chloroplast. Functionally, with S4 and S5 plays an important role in translational accuracy. Located at the interface of the 30S and 50S subunits. The protein is Small ribosomal subunit protein uS12cz/uS12cy (rps12-A) of Psilotum nudum (Whisk fern).